Consider the following 404-residue polypeptide: Zinc finger CCCH domain-containing protein 15 homolog (404 aa).

A compositionally biased stretch (pro residues) spans 1-10 (MPPKKAPPGP). Positions 1-71 (MPPKKAPPGP…KRKEEKEKKL (71 aa)) are disordered. Basic and acidic residues predominate over residues 12–28 (KKTEQKKKEKVIEDKTF). Positions 38-50 (QQKFIQQVQKQVQ) are enriched in low complexity. The segment covering 56–71 (PRQDGDKRKEEKEKKL) has biased composition (basic and acidic residues). C3H1-type zinc fingers lie at residues 94–121 (DPKSVVCAFFKQGTCTKGDKCKFSHDLS) and 165–202 (PTTDIICKFFLEAVEKSKYGWFWECPNGGKCIYRHALP). At T218 the chain carries Phosphothreonine. S221 is subject to Phosphoserine. The stretch at 246-270 (LAWKKRKIAEKKAKLAAEEERKKSD) forms a coiled coil. Composition is skewed to low complexity over residues 352-361 (EAAKTAAAED) and 369-380 (PSSSAPANDAAP). Positions 352-380 (EAAKTAAAEDAAADEDGPSSSAPANDAAP) are disordered.

It belongs to the ZC3H15/TMA46 family.

The polypeptide is Zinc finger CCCH domain-containing protein 15 homolog (Drosophila melanogaster (Fruit fly)).